Here is a 353-residue protein sequence, read N- to C-terminus: Phosphoribosylformylglycinamidine cyclo-ligase (353 aa).

The protein belongs to the AIR synthase family.

The protein localises to the cytoplasm. The enzyme catalyses 2-formamido-N(1)-(5-O-phospho-beta-D-ribosyl)acetamidine + ATP = 5-amino-1-(5-phospho-beta-D-ribosyl)imidazole + ADP + phosphate + H(+). Its pathway is purine metabolism; IMP biosynthesis via de novo pathway; 5-amino-1-(5-phospho-D-ribosyl)imidazole from N(2)-formyl-N(1)-(5-phospho-D-ribosyl)glycinamide: step 2/2. In Ralstonia nicotianae (strain ATCC BAA-1114 / GMI1000) (Ralstonia solanacearum), this protein is Phosphoribosylformylglycinamidine cyclo-ligase.